The following is a 174-amino-acid chain: Crossover junction endodeoxyribonuclease RuvC (174 aa).

Active-site residues include aspartate 8, glutamate 67, and aspartate 139. 3 residues coordinate Mg(2+): aspartate 8, glutamate 67, and aspartate 139.

Belongs to the RuvC family. As to quaternary structure, homodimer which binds Holliday junction (HJ) DNA. The HJ becomes 2-fold symmetrical on binding to RuvC with unstacked arms; it has a different conformation from HJ DNA in complex with RuvA. In the full resolvosome a probable DNA-RuvA(4)-RuvB(12)-RuvC(2) complex forms which resolves the HJ. The cofactor is Mg(2+).

The protein resides in the cytoplasm. It catalyses the reaction Endonucleolytic cleavage at a junction such as a reciprocal single-stranded crossover between two homologous DNA duplexes (Holliday junction).. Its function is as follows. The RuvA-RuvB-RuvC complex processes Holliday junction (HJ) DNA during genetic recombination and DNA repair. Endonuclease that resolves HJ intermediates. Cleaves cruciform DNA by making single-stranded nicks across the HJ at symmetrical positions within the homologous arms, yielding a 5'-phosphate and a 3'-hydroxyl group; requires a central core of homology in the junction. The consensus cleavage sequence is 5'-(A/T)TT(C/G)-3'. Cleavage occurs on the 3'-side of the TT dinucleotide at the point of strand exchange. HJ branch migration catalyzed by RuvA-RuvB allows RuvC to scan DNA until it finds its consensus sequence, where it cleaves and resolves the cruciform DNA. The protein is Crossover junction endodeoxyribonuclease RuvC of Pseudomonas putida (strain GB-1).